The following is a 500-amino-acid chain: Probable cytosol aminopeptidase (500 aa).

Mn(2+) contacts are provided by lysine 265 and aspartate 270. Lysine 277 is an active-site residue. Positions 288, 347, and 349 each coordinate Mn(2+). Arginine 351 is a catalytic residue.

Belongs to the peptidase M17 family. Mn(2+) serves as cofactor.

It localises to the cytoplasm. It catalyses the reaction Release of an N-terminal amino acid, Xaa-|-Yaa-, in which Xaa is preferably Leu, but may be other amino acids including Pro although not Arg or Lys, and Yaa may be Pro. Amino acid amides and methyl esters are also readily hydrolyzed, but rates on arylamides are exceedingly low.. The catalysed reaction is Release of an N-terminal amino acid, preferentially leucine, but not glutamic or aspartic acids.. In terms of biological role, presumably involved in the processing and regular turnover of intracellular proteins. Catalyzes the removal of unsubstituted N-terminal amino acids from various peptides. This chain is Probable cytosol aminopeptidase, found in Rickettsia typhi (strain ATCC VR-144 / Wilmington).